The chain runs to 418 residues: Nickel and cobalt resistance protein CnrC (418 aa).

The signal sequence occupies residues 1–29 (MKQVISSFLCRPRFVGSAIWLLPVALSHA).

The protein belongs to the outer membrane factor (OMF) (TC 1.B.17) family.

The products of the genes cnrA, cnrB, and cnrC are likely to form a membrane-bound protein complex catalyzing an energy-dependent efflux of Ni(2+) and Co(2+). The mechanism of action of the CnrCBA complex may be that of a proton/cation antiporter. The sequence is that of Nickel and cobalt resistance protein CnrC (cnrC) from Cupriavidus metallidurans (strain ATCC 43123 / DSM 2839 / NBRC 102507 / CH34) (Ralstonia metallidurans).